The chain runs to 465 residues: Probable spore coat protein DDB_G0283555 (465 aa).

Residues 1-22 (MRINNLLVCLVLVFSTLSISNA) form the signal peptide. The region spanning 35 to 153 (RNCDSLSEDQ…RYPVCKGGGG (119 aa)) is the DSCP-N domain. 7 Follistatin-like domains span residues 160–182 (PCKNVICPEDYCCQDIHGGAYCV), 195–217 (LCKAIKCGRGKECIVKDGKACCV), 229–251 (LCDAVQCPKGFNCVEFGGTANCV), 257–280 (ECEHHHCPPGYDCVVDSHHRPHCQ), 287–309 (LCRNVTCPYGYVCKAINNLPTCI), 318–340 (PCRDLHCPSGYSCEIINDLPSCV), and 435–458 (LCEFVKCSPGTKCVADTTGIPVCL).

Its function is as follows. May contribute to the structure of the coat at the interface between the middle, cellulosic layer and the outer, electron-dense, proteinaceous layer. This chain is Probable spore coat protein DDB_G0283555, found in Dictyostelium discoideum (Social amoeba).